The following is a 504-amino-acid chain: Maturase K (504 aa).

The protein belongs to the intron maturase 2 family. MatK subfamily.

It is found in the plastid. The protein resides in the chloroplast. Functionally, usually encoded in the trnK tRNA gene intron. Probably assists in splicing its own and other chloroplast group II introns. The sequence is that of Maturase K from Quercus rubra (Northern red oak).